A 270-amino-acid chain; its full sequence is MAQAEGAYHRPLATSRLELNLVRLLCRCESMAAEKREPDEWRLEKYVGALEDMLQALKVQASKPASEVISEYSRKVDFLKGMLQAEKLTSSSEKALANQFLAPGRVPTTAKERVPATKTVHLQSRARYTSEMRSELLGMEPSGECEVDMRKRAAKGSRPADERQSASELDLVLQRHQGLQEKLAEEMLGLARSLKTNTLAAQSVIKKDNQTLSHSLKMADQNLEKLKLESERLEQHAQKSVNWLLWAMLIVVCFVFISMILFIRIMPRLK.

The Cytoplasmic portion of the chain corresponds to 1–242 (MAQAEGAYHR…LEQHAQKSVN (242 aa)). Residues 206–242 (KKDNQTLSHSLKMADQNLEKLKLESERLEQHAQKSVN) are a coiled coil. Residues 243–263 (WLLWAMLIVVCFVFISMILFI) form a helical; Anchor for type IV membrane protein membrane-spanning segment. Residues 264–270 (RIMPRLK) are Lumenal-facing.

The protein belongs to the USE1 family. Component of a SNARE complex consisting of STX18, USE1L, BNIP1/SEC20L and SEC22B. Interacts directly with STX18.

The protein resides in the endoplasmic reticulum membrane. Functionally, SNARE that may be involved in targeting and fusion of Golgi-derived retrograde transport vesicles with the ER. This is Vesicle transport protein USE1 (Use1) from Mus musculus (Mouse).